We begin with the raw amino-acid sequence, 330 residues long: MPLLDIRNLTIEFKTSEGWVKAVDRVSMTLSEGEIRGLVGESGSGKSLIAKAICGVAKDNWRVTADRMRFDDIDLLRLSSRERRKLVGHNVSMIFQEPQSCLDPSERVGRQLMQNIPAWTYKGRWWQRLGWRKRRAIELLHRVGIKDHKDAMRSFPYELTDGECQKVMIAIALANQPRLLIADEPTNSMEPTTQAQIFRLLTRLNQNSNTTILLISHDLQMLSQWADKINVLYCGQTVETAPSKDLVTMPHHPYTQALIRAIPDFGSAMPHKSRLNTLPGAIPLLEQLPIGCRLGPRCPYAQRECIITPRLTGAKNHLYACHFPLNMERE.

The region spanning 6-259 (IRNLTIEFKT…PHHPYTQALI (254 aa)) is the ABC transporter domain. 40 to 47 (GESGSGKS) serves as a coordination point for ATP.

This sequence belongs to the ABC transporter superfamily.

The protein localises to the cell inner membrane. In terms of biological role, involved in a peptide intake transport system that plays a role in the resistance to antimicrobial peptides. The polypeptide is Peptide transport system ATP-binding protein SapD (Salmonella typhimurium (strain LT2 / SGSC1412 / ATCC 700720)).